A 319-amino-acid chain; its full sequence is Ribonuclease Z (319 aa).

Residues H62, H64, D66, H67, H145, D215, and H273 each contribute to the Zn(2+) site. The active-site Proton acceptor is D66.

It belongs to the RNase Z family. As to quaternary structure, homodimer. Zn(2+) is required as a cofactor.

It carries out the reaction Endonucleolytic cleavage of RNA, removing extra 3' nucleotides from tRNA precursor, generating 3' termini of tRNAs. A 3'-hydroxy group is left at the tRNA terminus and a 5'-phosphoryl group is left at the trailer molecule.. Its function is as follows. Zinc phosphodiesterase, which displays some tRNA 3'-processing endonuclease activity. Probably involved in tRNA maturation, by removing a 3'-trailer from precursor tRNA. This chain is Ribonuclease Z, found in Borrelia recurrentis (strain A1).